The chain runs to 933 residues: uncharacterized protein (933 aa).

Positions 244–255 are enriched in basic and acidic residues; it reads KKDIGAKPKPVD. Disordered stretches follow at residues 244 to 277 and 343 to 364; these read KKDI…ELPD and SAPH…EWKG. Over residues 343 to 353 the composition is skewed to polar residues; the sequence is SAPHQPSSQHA. Residues 771–791 form a helical membrane-spanning segment; that stretch reads VIHGMVLMFAGGKLLFGGCVL. The segment covering 890 to 907 has biased composition (basic and acidic residues); that stretch reads DKIEKEPPPSPEKVKPPE. The segment at 890–933 is disordered; the sequence is DKIEKEPPPSPEKVKPPEIELQPFTKMRRSSKKTAGFKKLNSKK. The segment covering 915 to 933 has biased composition (basic residues); it reads KMRRSSKKTAGFKKLNSKK.

It is found in the membrane. This is an uncharacterized protein from Mus musculus (Mouse).